The following is a 433-amino-acid chain: Adenosylhomocysteinase B (433 aa).

Substrate contacts are provided by Thr-57, Asp-132, Glu-157, Lys-187, and Asp-191. The segment at 184 to 351 (SVTKSKFDNL…EGRLVNLGCA (168 aa)) is NAD binding.

Belongs to the adenosylhomocysteinase family. In terms of assembly, homotetramer. It depends on NAD(+) as a cofactor.

The protein resides in the cytoplasm. It catalyses the reaction S-adenosyl-L-homocysteine + H2O = L-homocysteine + adenosine. It participates in amino-acid biosynthesis; L-homocysteine biosynthesis; L-homocysteine from S-adenosyl-L-homocysteine: step 1/1. In terms of biological role, catalyzes the hydrolysis of S-adenosyl-L-homocysteine to form adenosine and homocysteine. Binds copper ions. The chain is Adenosylhomocysteinase B (ahcy-b) from Xenopus laevis (African clawed frog).